Reading from the N-terminus, the 620-residue chain is MNLERLRKRVRQYLDQQQYQSALFWADKVASLSREEPQDIYWLAQCLYLTAQYHRAAHALRSRKLDKLYEACRYLAARCHYAAKEHQQALDVLDMEEPINKRLFEKYLKDESGFKDPSSDWEMSQSSIKSSICLLRGKIYDALDNRTLATYSYKEALKLDVYCFEAFDLLTSHHMLTAQEEKELLESLPLSKLCNEEQELLRFLFENKLKKYNKPSETVIPESVDGLQENLDVVVSLAERHYYNCDFKMCYKLTSVVMEKDPFHASCLPVHIGTLVELNKANELFYLSHKLVDLYPSNPVSWFAVGCYYLMVGHKNEHARRYLSKATTLEKTYGPAWIAYGHSFAVESEHDQAMAAYFTAAQLMKGCHLPMLYIGLEYGLTNNSKLAERFFSQALSIAPEDPFVMHEVGVVAFQNGEWKTAEKWFLDALEKIKAIGNEVTVDKWEPLLNNLGHVCRKLKKYAEALDYHRQALVLIPQNASTYSAIGYIHSLMGNFENAVDYFHTALGLRRDDTFSVTMLGHCIEMYIGDSEAYIGADIKDKLKCYDFDVHTMKTLKNIISPPWDFREFEVEKQTAEETGLTPLETSRKTPDSRPSLEETFEIEMNESDMMLETSMSDHST.

TPR repeat units lie at residues 4 to 33, 37 to 62, and 70 to 93; these read ERLRKRVRQYLDQQQYQSALFWADKVASLS, PQDIYWLAQCLYLTAQYHRAAHALRS, and EACRYLAARCHYAAKEHQQALDVL. The residue at position 112 (serine 112) is a Phosphoserine. TPR repeat units follow at residues 128–159, 164–187, 198–222, 232–260, 267–294, 299–329, 334–362, 369–397, 402–434, 442–474, and 479–508; these read IKSSICLLRGKIYDALDNRTLATYSYKEALKL, FEAFDLLTSHHMLTAQEEKELLES, QELLRFLFENKLKKYNKPSETVIPE, DVVVSLAERHYYNCDFKMCYKLTSVVMEK, CLPVHIGTLVELNKANELFYLSHKLVDL, PVSWFAVGCYYLMVGHKNEHARRYLSKATTL, GPAWIAYGHSFAVESEHDQAMAAYFTAAQ, LPMLYIGLEYGLTNNSKLAERFFSQALSI, PFVMHEVGVVAFQNGEWKTAEKWFLDALEKIKA, DKWEPLLNNLGHVCRKLKKYAEALDYHRQALVL, and ASTYSAIGYIHSLMGNFENAVDYFHTALGL. Phosphoserine occurs at positions 490 and 560. The interval 574–599 is disordered; it reads TAEETGLTPLETSRKTPDSRPSLEET. A Phosphothreonine modification is found at threonine 581. The segment covering 585-596 has biased composition (basic and acidic residues); sequence TSRKTPDSRPSL. Serine 595 bears the Phosphoserine mark. Position 599 is a phosphothreonine (threonine 599).

This sequence belongs to the APC6/CDC16 family. In terms of assembly, V-shaped homodimer. The mammalian APC/C is composed at least of 14 distinct subunits ANAPC1, ANAPC2, CDC27/APC3, ANAPC4, ANAPC5, CDC16/APC6, ANAPC7, CDC23/APC8, ANAPC10, ANAPC11, CDC26/APC12, ANAPC13, ANAPC15 and ANAPC16 that assemble into a complex of at least 19 chains with a combined molecular mass of around 1.2 MDa; APC/C interacts with FZR1 and FBXO5. Interacts with PPP5C and CDC20. Interacts with CDC26. Interacts with FBXO43. Phosphorylated. Phosphorylation on Ser-560 occurs specifically during mitosis.

The protein localises to the cytoplasm. It is found in the cytoskeleton. The protein resides in the microtubule organizing center. It localises to the centrosome. Its subcellular location is the spindle. The protein operates within protein modification; protein ubiquitination. Component of the anaphase promoting complex/cyclosome (APC/C), a cell cycle-regulated E3 ubiquitin ligase that controls progression through mitosis and the G1 phase of the cell cycle. The APC/C complex acts by mediating ubiquitination and subsequent degradation of target proteins: it mainly mediates the formation of 'Lys-11'-linked polyubiquitin chains and, to a lower extent, the formation of 'Lys-48'- and 'Lys-63'-linked polyubiquitin chains. The APC/C complex catalyzes assembly of branched 'Lys-11'-/'Lys-48'-linked branched ubiquitin chains on target proteins. In Homo sapiens (Human), this protein is Cell division cycle protein 16 homolog (CDC16).